The following is a 435-amino-acid chain: Tol-Pal system protein TolB (435 aa).

The first 28 residues, 1-28 (MTKCSFFRAILVAVGLMTAAVFATPANA), serve as a signal peptide directing secretion. Positions 288–310 (STAAIDTSPSYSPDGARVSFESD) are disordered.

Belongs to the TolB family. The Tol-Pal system is composed of five core proteins: the inner membrane proteins TolA, TolQ and TolR, the periplasmic protein TolB and the outer membrane protein Pal. They form a network linking the inner and outer membranes and the peptidoglycan layer.

Its subcellular location is the periplasm. Functionally, part of the Tol-Pal system, which plays a role in outer membrane invagination during cell division and is important for maintaining outer membrane integrity. The sequence is that of Tol-Pal system protein TolB from Rhizobium johnstonii (strain DSM 114642 / LMG 32736 / 3841) (Rhizobium leguminosarum bv. viciae).